The sequence spans 204 residues: MSNFTAKVPLSERMADVLISKDRWKDDEEGYLKVKYGLEIILINVMKFAIVYGIALVTGLLLQTVTVHLSYLWLRRYSFGLHATKTLNCTLISLTMFVLAPFIFQNIPSNNWIVLGTFAFILLNMFLFAPADTESLPLIGEEHRKKLKRKAMIGTLILTGIALLIPFAEMKTLIMVGSLFQVISINPLTYKLLKRRYRNYEKYE.

5 helical membrane-spanning segments follow: residues 51 to 73, 87 to 107, 111 to 131, 151 to 168, and 173 to 190; these read VYGI…SYLW, LNCT…FQNI, NWIV…FAPA, AMIG…IPFA, and LIMV…PLTY.

This sequence belongs to the AgrB family.

Its subcellular location is the cell membrane. May be involved in the proteolytic processing of a quorum sensing system signal molecule precursor. The polypeptide is Putative AgrB-like protein (Listeria innocua serovar 6a (strain ATCC BAA-680 / CLIP 11262)).